The primary structure comprises 149 residues: Large ribosomal subunit protein bL9 (149 aa).

It belongs to the bacterial ribosomal protein bL9 family.

Binds to the 23S rRNA. The protein is Large ribosomal subunit protein bL9 of Pasteurella multocida (strain Pm70).